We begin with the raw amino-acid sequence, 1075 residues long: Atos homolog protein A (1075 aa).

The transactivation domain 1 (TAD1) stretch occupies residues 24 to 32; it reads ALLITEGRT. 3 disordered regions span residues 430 to 469, 570 to 592, and 703 to 766; these read FGSP…RQPA, YSPQ…PDSI, and LNKN…PHSV. Residues 440 to 454 show a composition bias toward basic and acidic residues; the sequence is DSREGKVREKSETRP. Positions 703 to 712 are enriched in polar residues; sequence LNKNKTNCSS. Basic and acidic residues predominate over residues 746 to 759; sequence DRLKTEQEAKRDSG. Residues 878-935 are required for macropage invasion; sequence LLGNFEESVLNYRLDPLGIVDGFTAEVGASGTFCPTHLTLPVEVSFYSVSDDNAPSPY. The transactivation domain 2 (TAD2) stretch occupies residues 962-970; the sequence is FNPNKTVVK.

This sequence belongs to the ATOS family.

It localises to the nucleus. Transcription regulator that syncronizes transcriptional and translational programs to promote macrophage invasion of tissues. This chain is Atos homolog protein A (Atosa), found in Mus musculus (Mouse).